The primary structure comprises 407 residues: Peptidase T (407 aa).

Residue His-81 participates in Zn(2+) binding. Asp-83 is an active-site residue. Asp-142 serves as a coordination point for Zn(2+). Glu-176 functions as the Proton acceptor in the catalytic mechanism. Zn(2+) contacts are provided by Glu-177, Asp-199, and His-381.

This sequence belongs to the peptidase M20B family. Zn(2+) is required as a cofactor.

It localises to the cytoplasm. The enzyme catalyses Release of the N-terminal residue from a tripeptide.. Cleaves the N-terminal amino acid of tripeptides. The sequence is that of Peptidase T from Streptococcus pneumoniae (strain ATCC 700669 / Spain 23F-1).